Consider the following 188-residue polypeptide: ATP synthase subunit b 1 (188 aa).

Residues 7–27 (LSVLALAMLAANPAFAAGGGI) form a helical membrane-spanning segment.

This sequence belongs to the ATPase B chain family. F-type ATPases have 2 components, F(1) - the catalytic core - and F(0) - the membrane proton channel. F(1) has five subunits: alpha(3), beta(3), gamma(1), delta(1), epsilon(1). F(0) has three main subunits: a(1), b(2) and c(10-14). The alpha and beta chains form an alternating ring which encloses part of the gamma chain. F(1) is attached to F(0) by a central stalk formed by the gamma and epsilon chains, while a peripheral stalk is formed by the delta and b chains.

The protein resides in the cell inner membrane. Its function is as follows. F(1)F(0) ATP synthase produces ATP from ADP in the presence of a proton or sodium gradient. F-type ATPases consist of two structural domains, F(1) containing the extramembraneous catalytic core and F(0) containing the membrane proton channel, linked together by a central stalk and a peripheral stalk. During catalysis, ATP synthesis in the catalytic domain of F(1) is coupled via a rotary mechanism of the central stalk subunits to proton translocation. Component of the F(0) channel, it forms part of the peripheral stalk, linking F(1) to F(0). The chain is ATP synthase subunit b 1 from Roseobacter denitrificans (strain ATCC 33942 / OCh 114) (Erythrobacter sp. (strain OCh 114)).